We begin with the raw amino-acid sequence, 185 residues long: A-type ATP synthase subunit E (185 aa).

This sequence belongs to the V-ATPase E subunit family. Has multiple subunits with at least A(3), B(3), C, D, E, F, H, I and proteolipid K(x).

The protein resides in the cell membrane. Functionally, component of the A-type ATP synthase that produces ATP from ADP in the presence of a proton gradient across the membrane. The sequence is that of A-type ATP synthase subunit E from Thermoplasma volcanium (strain ATCC 51530 / DSM 4299 / JCM 9571 / NBRC 15438 / GSS1).